Consider the following 1172-residue polypeptide: Laminin subunit beta-3 (1172 aa).

The N-terminal stretch at 1-17 (MRPFFLLCFALPGLLHA) is a signal peptide. Residues 22-249 (SRGACYPPVG…AVSQLRLQGS (228 aa)) form the Laminin N-terminal domain. An N-linked (GlcNAc...) asparagine glycan is attached at Asn220. 24 disulfides stabilise this stretch: Cys250–Cys259, Cys252–Cys279, Cys281–Cys290, Cys293–Cys313, Cys316–Cys325, Cys318–Cys343, Cys346–Cys355, Cys358–Cys376, Cys379–Cys392, Cys381–Cys399, Cys401–Cys410, Cys413–Cys428, Cys431–Cys444, Cys433–Cys451, Cys453–Cys462, Cys465–Cys478, Cys481–Cys493, Cys483–Cys500, Cys502–Cys511, Cys519–Cys531, Cys534–Cys546, Cys536–Cys553, Cys555–Cys564, and Cys567–Cys578. Laminin EGF-like domains lie at 250-315 (CFCH…ECQR), 316-378 (CDCN…TCIS), 379-430 (CECD…GCHR), 431-480 (CDCN…GCEP), 481-533 (CACD…GCRA), and 534-580 (CDCD…VCVA). Residues 579-785 (VACHPCFQTY…SLPDLTPTFN (207 aa)) are domain II. A glycan (N-linked (GlcNAc...) asparagine) is linked at Asn604. The stretch at 723–757 (EQSAQAAQQVSDSSRLLDQLRDSRREAERLVRQAG) forms a coiled coil. Residues 786-816 (KLCGNSRQMACTPISCPGELCPQDNGTACGS) form a domain alpha region. A glycan (N-linked (GlcNAc...) asparagine) is linked at Asn810. A domain I region spans residues 817–1170 (RCRGVLPRAG…INGRVLYYAT (354 aa)). Coiled-coil stretches lie at residues 831 to 884 (MAGQ…MEED) and 948 to 1133 (VLSQ…ELEL).

In terms of assembly, laminin is a complex glycoprotein, consisting of three different polypeptide chains (alpha, beta, gamma), which are bound to each other by disulfide bonds into a cross-shaped molecule comprising one long and three short arms with globules at each end. Beta-3 is a subunit of laminin-5 (laminin-332 or epiligrin/kalinin/nicein). Interacts with ECM1. As to expression, found in the basement membranes (major component).

It is found in the secreted. The protein localises to the extracellular space. It localises to the extracellular matrix. Its subcellular location is the basement membrane. In terms of biological role, binding to cells via a high affinity receptor, laminin is thought to mediate the attachment, migration and organization of cells into tissues during embryonic development by interacting with other extracellular matrix components. The sequence is that of Laminin subunit beta-3 (LAMB3) from Homo sapiens (Human).